Here is a 430-residue protein sequence, read N- to C-terminus: Acetyl-CoA acetyltransferase FG05087, mitochondrial (430 aa).

The transit peptide at 1-32 directs the protein to the mitochondrion; the sequence is MTVTQLRSAGRLAQLAGHVNGARQFSTRPALR. The Acyl-thioester intermediate role is filled by cysteine 122. Tyrosine 217 lines the K(+) pocket. CoA is bound at residue lysine 260. Alanine 278 is a K(+) binding site. Serine 282 provides a ligand contact to CoA. Catalysis depends on proton acceptor residues histidine 385 and cysteine 413. Asparagine 414 is a binding site for chloride.

The protein belongs to the thiolase-like superfamily. Thiolase family. In terms of assembly, homotetramer. K(+) serves as cofactor.

It is found in the mitochondrion. It carries out the reaction 2 acetyl-CoA = acetoacetyl-CoA + CoA. In terms of biological role, mitochondrial acetyl-CoA acetyltransferase that catalyzes both the formation and degradation of acetoacetyl-CoA. Seems not to be involved in ergosterol biosynthesis. Plays an important role in growth, morphogenesis and maintaining mitochondrial function including the response to oxidative stresses. The protein is Acetyl-CoA acetyltransferase FG05087, mitochondrial of Gibberella zeae (strain ATCC MYA-4620 / CBS 123657 / FGSC 9075 / NRRL 31084 / PH-1) (Wheat head blight fungus).